The chain runs to 231 residues: Orotidine 5'-phosphate decarboxylase (231 aa).

Substrate contacts are provided by residues Asp-11, Lys-33, 60–69, Thr-117, Arg-178, Gln-187, Gly-207, and Arg-208; that span reads DLKFHDIPNT. Lys-62 acts as the Proton donor in catalysis.

The protein belongs to the OMP decarboxylase family. Type 1 subfamily. In terms of assembly, homodimer.

The enzyme catalyses orotidine 5'-phosphate + H(+) = UMP + CO2. The protein operates within pyrimidine metabolism; UMP biosynthesis via de novo pathway; UMP from orotate: step 2/2. Its function is as follows. Catalyzes the decarboxylation of orotidine 5'-monophosphate (OMP) to uridine 5'-monophosphate (UMP). The chain is Orotidine 5'-phosphate decarboxylase from Nitrosomonas europaea (strain ATCC 19718 / CIP 103999 / KCTC 2705 / NBRC 14298).